The primary structure comprises 164 residues: Nucleotide-binding protein Helmi_22490 (164 aa).

The protein belongs to the YajQ family.

Nucleotide-binding protein. The chain is Nucleotide-binding protein Helmi_22490 from Heliobacterium modesticaldum (strain ATCC 51547 / Ice1).